Here is a 236-residue protein sequence, read N- to C-terminus: MATTHLDVCAVVPAAGFGRRMQTECPKQYLSIGNQTILEHSVHALLAHPRVKRVVIAISPGDSRFAQLPLANHPQITVVDGGDERADSVLAGLKAAGDAQWVLVHDAARPCLHQDDLARLLTLSETSRTGGILAAPVRDTMKRAEPGKNAIAHTVDRNGLWHALTPQFFPRELLHDCLTRALNEGATITDEASALEYCGFHPQLVEGRADNIKVTRPEDLALAEFYLTRTIHQENT.

Belongs to the IspD/TarI cytidylyltransferase family. IspD subfamily. As to quaternary structure, homodimer.

The catalysed reaction is 2-C-methyl-D-erythritol 4-phosphate + CTP + H(+) = 4-CDP-2-C-methyl-D-erythritol + diphosphate. It participates in isoprenoid biosynthesis; isopentenyl diphosphate biosynthesis via DXP pathway; isopentenyl diphosphate from 1-deoxy-D-xylulose 5-phosphate: step 2/6. Its function is as follows. Catalyzes the formation of 4-diphosphocytidyl-2-C-methyl-D-erythritol from CTP and 2-C-methyl-D-erythritol 4-phosphate (MEP). This Escherichia coli O17:K52:H18 (strain UMN026 / ExPEC) protein is 2-C-methyl-D-erythritol 4-phosphate cytidylyltransferase.